The primary structure comprises 507 residues: ATP synthase subunit alpha, chloroplastic (507 aa).

170–177 (GDRQTGKT) lines the ATP pocket.

This sequence belongs to the ATPase alpha/beta chains family. F-type ATPases have 2 components, CF(1) - the catalytic core - and CF(0) - the membrane proton channel. CF(1) has five subunits: alpha(3), beta(3), gamma(1), delta(1), epsilon(1). CF(0) has four main subunits: a, b, b' and c.

The protein resides in the plastid. Its subcellular location is the chloroplast thylakoid membrane. It carries out the reaction ATP + H2O + 4 H(+)(in) = ADP + phosphate + 5 H(+)(out). Produces ATP from ADP in the presence of a proton gradient across the membrane. The alpha chain is a regulatory subunit. The sequence is that of ATP synthase subunit alpha, chloroplastic from Chloranthus spicatus (Chulantree).